The sequence spans 157 residues: Baculoviral IAP repeat-containing protein 5.2-B (157 aa).

A BIR repeat occupies 31–101 (RLRTFSNWPF…KHSPSCLFIA (71 aa)). Phosphothreonine; by CDK1 is present on threonine 47. The Zn(2+) site is built by cysteine 70, cysteine 73, histidine 90, and cysteine 97.

The protein belongs to the IAP family. In terms of assembly, component of the CPC at least composed of survivin/birc5, incenp, cdca8/borealin and/or cdca9/dasra-A, and aurkb/aurora-B. Interacts directly with incenp (via N-terminus). Interacts with rxra; the interaction is stronger in the absence of 9-cis retinoic acids. In terms of processing, ubiquitination is required for centrosome-targeting. Exhibits strong and homogeneous expression in developing oocytes. In embryos, expressed in the animal hemisphere from one-cell to yolk plug stages, and highly expressed in the future brain and dorsal region of the neural tube at the neurula stage and early tail-bud stage. At tadpole stages, expression is restricted at a low level to the head region.

The protein resides in the cytoplasm. It localises to the nucleus. Its subcellular location is the chromosome. It is found in the centromere. The protein localises to the cytoskeleton. The protein resides in the spindle. Does not appear to exhibit anti-apoptotic activity. Plays a role in increasing blood vessel size during development. Component of the chromosomal passenger complex (CPC), a complex that acts as a key regulator of mitosis. The CPC complex has essential functions at the centromere in ensuring correct chromosome alignment and segregation and is required for chromatin-induced microtubule stabilization and spindle assembly. The sequence is that of Baculoviral IAP repeat-containing protein 5.2-B (birc5.2-b) from Xenopus laevis (African clawed frog).